Consider the following 455-residue polypeptide: SVGFKAGVKDYKLTYYTPDYETKDTDILAAFRVTPQPGVPPEEAGAAVAAESSTGTWTTVWTDGLTSLDRYKGRCYHIEPVAGEESQFIAYVAYPLDLFEEGSVTNMFTSIVGNVFGFKALRALRLEDLRIPNAYVKTFQGPPHGIQVERDKLNKYGRPLLGCTIKPKLGLSAKNYGRAVYECLRGGLDFTKDDENVNSQPFMRWRDRFLFCAEALYKAQAETGEIKGHYLNATAGTCEEMIKRAVFARELGVPIVMHDYLTGGFTANTTLAHYCRDNGLLLHIHRAMHAVIDRQKNHGMHFRVLAKALRLSGGDHIHSGTVVGKLEGEREITLGFVDLLRDDFVEKDRSRGIYFTQDWVSLPGVLPVASGGIHVWHMPALTEIFGDDSVLQFGGGTLGHPWGNAPGAVANRVALEACVQARNEGRDLASEGNQIIREASKWSPELAAACEVWKE.

Lys5 carries the N6,N6,N6-trimethyllysine modification. The substrate site is built by Asn114 and Thr164. The active-site Proton acceptor is Lys166. Lys168 contacts substrate. Residues Lys192, Asp194, and Glu195 each contribute to the Mg(2+) site. Lys192 is modified (N6-carboxylysine). The active-site Proton acceptor is His285. Positions 286, 318, and 370 each coordinate substrate.

This sequence belongs to the RuBisCO large chain family. Type I subfamily. Heterohexadecamer of 8 large chains and 8 small chains; disulfide-linked. The disulfide link is formed within the large subunit homodimers. It depends on Mg(2+) as a cofactor. The disulfide bond which can form in the large chain dimeric partners within the hexadecamer appears to be associated with oxidative stress and protein turnover.

It is found in the plastid. The protein resides in the chloroplast. It carries out the reaction 2 (2R)-3-phosphoglycerate + 2 H(+) = D-ribulose 1,5-bisphosphate + CO2 + H2O. The enzyme catalyses D-ribulose 1,5-bisphosphate + O2 = 2-phosphoglycolate + (2R)-3-phosphoglycerate + 2 H(+). In terms of biological role, ruBisCO catalyzes two reactions: the carboxylation of D-ribulose 1,5-bisphosphate, the primary event in carbon dioxide fixation, as well as the oxidative fragmentation of the pentose substrate in the photorespiration process. Both reactions occur simultaneously and in competition at the same active site. This chain is Ribulose bisphosphate carboxylase large chain, found in Lupinus cosentinii (West Australian blue lupine).